The following is a 207-amino-acid chain: uncharacterized protein (207 aa).

Active-site charge relay system residues include S119 and H160.

Belongs to the peptidase S51 family.

This is an uncharacterized protein from Pasteurella multocida (strain Pm70).